The following is a 329-amino-acid chain: PTS-dependent dihydroxyacetone kinase 1, dihydroxyacetone-binding subunit DhaK (329 aa).

Residues 7-329 enclose the DhaK domain; that stretch reads GTDQVVEQMV…LKLPVDTIAW (323 aa). Residues 53 to 56, Lys-104, and Asp-109 each bind dihydroxyacetone; that span reads GSGH. The Proton acceptor role is filled by His-56. Residue His-218 is the Tele-hemiaminal-histidine intermediate of the active site.

Homodimer. The dihydroxyacetone kinase complex is composed of a homodimer of DhaM, a homodimer of DhaK and the subunit DhaL.

The protein localises to the cytoplasm. It catalyses the reaction dihydroxyacetone + phosphoenolpyruvate = dihydroxyacetone phosphate + pyruvate. It participates in polyol metabolism; glycerol degradation. Functionally, dihydroxyacetone binding subunit of the dihydroxyacetone kinase, which is responsible for the phosphoenolpyruvate (PEP)-dependent phosphorylation of dihydroxyacetone via a phosphoryl group transfer from DhaL-ATP. The protein is PTS-dependent dihydroxyacetone kinase 1, dihydroxyacetone-binding subunit DhaK of Listeria innocua serovar 6a (strain ATCC BAA-680 / CLIP 11262).